The sequence spans 313 residues: Dehydrogenase/reductase SDR family member 1 (313 aa).

Alanine 2 carries the post-translational modification N-acetylalanine. Isoleucine 19 contributes to the NAD(+) binding site. Position 21 is an omega-N-methylarginine (arginine 21). Position 64 (aspartate 64) interacts with NAD(+). A substrate-binding site is contributed by serine 151. NAD(+)-binding residues include tyrosine 163, lysine 167, and threonine 198. Tyrosine 163 functions as the Proton acceptor in the catalytic mechanism. The segment at 235–313 (CVVALATDPN…WIIALYTSKF (79 aa)) is required for ER localization.

This sequence belongs to the short-chain dehydrogenases/reductases (SDR) family. In terms of tissue distribution, detected in heart, liver, adrenal glands, and at low levels in skeletal muscle, kidney, pancreas and brain.

It is found in the endoplasmic reticulum. It catalyses the reaction 17alpha-estradiol + NADP(+) = estrone + NADPH + H(+). The enzyme catalyses testosterone + NADP(+) = androst-4-ene-3,17-dione + NADPH + H(+). It carries out the reaction prostaglandin E1 + NADPH + H(+) = prostaglandin F1 + NADP(+). The catalysed reaction is isatin + NADPH + H(+) = 3-hydroxyindolin-2-one + NADP(+). Functionally, NADPH-dependent oxidoreductase which catalyzes the reduction of steroids (estrone, androstene-3,17-dione and cortisone) as well as prostaglandin E1, isatin and xenobiotics in vitro. May have a role in steroid and/or xenobiotic metabolism. In Homo sapiens (Human), this protein is Dehydrogenase/reductase SDR family member 1.